Consider the following 86-residue polypeptide: Small nuclear ribonucleoprotein F (86 aa).

Residues 14-86 (NPKPFLKGLV…NVLYIRELPN (73 aa)) form the Sm domain.

The protein belongs to the snRNP Sm proteins family. SmF/LSm6 subfamily. In terms of assembly, component of the Sm core complex, present in spliceosomal snRNP U1, U2, U4/U6 and U5. The core complex contains SMB1, SMD1, SMD2, SMD3, SME1, SMX3 and SMX2 (Sm proteins B, D1, D2, D3, E, F and G, respectively), and is probably a heptameric ring structure. SMX3 specifically interacts with SME1. Belongs to the CWC complex (or CEF1-associated complex), a spliceosome sub-complex reminiscent of a late-stage spliceosome composed of the U2, U5 and U6 snRNAs and at least BUD13, BUD31, BRR2, CDC40, CEF1, CLF1, CUS1, CWC2, CWC15, CWC21, CWC22, CWC23, CWC24, CWC25, CWC27, ECM2, HSH155, IST3, ISY1, LEA1, MSL1, NTC20, PRP8, PRP9, PRP11, PRP19, PRP21, PRP22, PRP45, PRP46, SLU7, SMB1, SMD1, SMD2, SMD3, SMX2, SMX3, SNT309, SNU114, SPP2, SYF1, SYF2, RSE1 and YJU2. Component of the U4/U6-U5 tri-snRNP complex composed of the U4, U6 and U5 snRNAs and at least PRP3, PRP4, PRP6, PRP8, PRP18, PRP31, PRP38, SNU13, SNU23, SNU66, SNU114, SPP381, SMB1, SMD1, SMD2, SMD3, SMX2, SMX3, LSM2, LSM3, LSM4, LSM5, LSM6, LSM7, LSM8, BRR2 and DIB1.

It is found in the nucleus. Its subcellular location is the cytoplasm. Its function is as follows. Plays a role in pre-mRNA splicing as a core component of the spliceosomal U1, U2, U4 and U5 small nuclear ribonucleoproteins (snRNPs), the building blocks of the spliceosome. This Saccharomyces cerevisiae (strain ATCC 204508 / S288c) (Baker's yeast) protein is Small nuclear ribonucleoprotein F (SMX3).